The following is a 171-amino-acid chain: UPF0763 protein HPP12_0677 (171 aa).

It belongs to the UPF0763 family.

This chain is UPF0763 protein HPP12_0677, found in Helicobacter pylori (strain P12).